The primary structure comprises 508 residues: MEFSPRAAELTTLLESRMINFYTNLKVDEIGRVVSVGDGIARVYGLNEIQAGEMVEFASGVKGIALNLENENVGIVVFGSDTAIKEGDLVKRTGSIVDVPAGKAMLGRVVDALGVPIDGKGALSDHERRRVEVKAPGIIERKSVHEPMQTGLKAVDSLVPIGRGQRELIIGDRQTGKTAIAIDTILNQKQMNSRGTNESETLYCVYVAIGQKRSTVAQLVQILSEANALEYSMLVAATASDPAPLQFLAPYSGCAMGEYFRDNGMHALIIYDDLSKQAVAYRQMSLLLRRPPGREAFPGDVFYLHSRLLERAAKRSDQTGAGSLTALPVIETQAGDVSAYIPTNVISITDGQICLETELFYRGIRPAINVGLSVSRVGSAAQLKAMKQVCGSSKLELAQYREVAAFAQFGSDLDAATQALLNRGARLTEVPKQPQYEPLPIEKQIVVIYAAVNGFCDRMPLDRISQYEKNILSTINPELLKSFLEKGGLTNERKMEPDASLKESALNL.

171–178 is a binding site for ATP; that stretch reads GDRQTGKT.

The protein belongs to the ATPase alpha/beta chains family. As to quaternary structure, F-type ATPases have 2 components, CF(1) - the catalytic core - and CF(0) - the membrane proton channel. CF(1) has five subunits: alpha(3), beta(3), gamma(1), delta(1), epsilon(1). CF(0) has three main subunits: a, b and c.

It localises to the mitochondrion. Its subcellular location is the mitochondrion inner membrane. Functionally, mitochondrial membrane ATP synthase (F(1)F(0) ATP synthase or Complex V) produces ATP from ADP in the presence of a proton gradient across the membrane which is generated by electron transport complexes of the respiratory chain. F-type ATPases consist of two structural domains, F(1) - containing the extramembraneous catalytic core, and F(0) - containing the membrane proton channel, linked together by a central stalk and a peripheral stalk. During catalysis, ATP synthesis in the catalytic domain of F(1) is coupled via a rotary mechanism of the central stalk subunits to proton translocation. Subunits alpha and beta form the catalytic core in F(1). Rotation of the central stalk against the surrounding alpha(3)beta(3) subunits leads to hydrolysis of ATP in three separate catalytic sites on the beta subunits. Subunit alpha does not bear the catalytic high-affinity ATP-binding sites. In Zea mays (Maize), this protein is ATP synthase subunit alpha, mitochondrial (ATPA).